The sequence spans 127 residues: Glycine cleavage system H protein (127 aa).

One can recognise a Lipoyl-binding domain in the interval 24 to 105 (AALVGITDFA…YGEGWLVKIR (82 aa)). Residue lysine 65 is modified to N6-lipoyllysine.

The protein belongs to the GcvH family. In terms of assembly, the glycine cleavage system is composed of four proteins: P, T, L and H. (R)-lipoate is required as a cofactor.

In terms of biological role, the glycine cleavage system catalyzes the degradation of glycine. The H protein shuttles the methylamine group of glycine from the P protein to the T protein. The polypeptide is Glycine cleavage system H protein (Chlorobium limicola (strain DSM 245 / NBRC 103803 / 6330)).